We begin with the raw amino-acid sequence, 358 residues long: D-alanine--D-alanine ligase B (358 aa).

The ATP-grasp domain maps to 147 to 352 (KYVLENFKFK…YSALIDELIE (206 aa)). 179 to 234 (VEKLQYDVFIKPANSGSSVGITKAHNKEELLKGLEEAFIHDKNVLVEEAINAREIE) provides a ligand contact to ATP. Mg(2+) is bound by residues Asp-305, Glu-319, and Asn-321.

The protein belongs to the D-alanine--D-alanine ligase family. Mg(2+) is required as a cofactor. Mn(2+) serves as cofactor.

Its subcellular location is the cytoplasm. The enzyme catalyses 2 D-alanine + ATP = D-alanyl-D-alanine + ADP + phosphate + H(+). The protein operates within cell wall biogenesis; peptidoglycan biosynthesis. Cell wall formation. This chain is D-alanine--D-alanine ligase B, found in Clostridium tetani (strain Massachusetts / E88).